A 189-amino-acid chain; its full sequence is 7-methyl-GTP pyrophosphatase (189 aa).

The active-site Proton acceptor is Asp-71.

This sequence belongs to the Maf family. YceF subfamily. The cofactor is a divalent metal cation.

It is found in the cytoplasm. It carries out the reaction N(7)-methyl-GTP + H2O = N(7)-methyl-GMP + diphosphate + H(+). Functionally, nucleoside triphosphate pyrophosphatase that hydrolyzes 7-methyl-GTP (m(7)GTP). May have a dual role in cell division arrest and in preventing the incorporation of modified nucleotides into cellular nucleic acids. In Bdellovibrio bacteriovorus (strain ATCC 15356 / DSM 50701 / NCIMB 9529 / HD100), this protein is 7-methyl-GTP pyrophosphatase.